The following is a 1350-amino-acid chain: ABC transporter G family member 45 (1350 aa).

The tract at residues 1 to 23 (MAAAVELTGDGGTTAETRWLSPP) is disordered. Residues 85–357 (AACAHMCTTR…FETMGFKCPS (273 aa)) form the ABC transporter 1 domain. 118 to 125 (GAPGSGKT) serves as a coordination point for ATP. In terms of domain architecture, ABC transmembrane type-2 1 spans 434–647 (NIFKACFSRE…AQNAVALNEF (214 aa)). The next 6 membrane-spanning stretches (helical) occupy residues 453–473 (VHIF…TLFL), 491–511 (ALFM…AMTI), 523–543 (ILAL…LPIS), 557–577 (VIGY…LFAM), 597–617 (MANM…GFVI), and 683–703 (ICVS…IFAL). Residues 749–1001 (LVFDHINYFV…NMIKYFEAIP (253 aa)) enclose the ABC transporter 2 domain. 794–801 (GITGAGKT) lines the ATP pocket. Residues 1074–1288 (AQCMACLWKQ…TVYGLMFSQL (215 aa)) enclose the ABC transmembrane type-2 2 domain. Helical transmembrane passes span 1099 to 1119 (INTF…GSTI), 1126 to 1146 (FNIL…NCSI), 1181 to 1201 (LPYM…MIGF), 1208 to 1228 (FFWF…YGMM), 1238 to 1258 (IAAG…GFII), 1269 to 1289 (WVYW…SQLG), and 1322 to 1342 (LVTS…FLSI).

The protein belongs to the ABC transporter superfamily. ABCG family. PDR (TC 3.A.1.205) subfamily.

The protein resides in the membrane. In terms of biological role, may be a general defense protein. The polypeptide is ABC transporter G family member 45 (Oryza sativa subsp. japonica (Rice)).